The sequence spans 426 residues: Serine--tRNA ligase (426 aa).

233 to 235 (TSE) is a binding site for L-serine. Position 264–266 (264–266 (RAE)) interacts with ATP. Glu-287 is an L-serine binding site. 351–354 (EISS) contributes to the ATP binding site. Ser-387 contacts L-serine.

It belongs to the class-II aminoacyl-tRNA synthetase family. Type-1 seryl-tRNA synthetase subfamily. In terms of assembly, homodimer. The tRNA molecule binds across the dimer.

It is found in the cytoplasm. It carries out the reaction tRNA(Ser) + L-serine + ATP = L-seryl-tRNA(Ser) + AMP + diphosphate + H(+). The catalysed reaction is tRNA(Sec) + L-serine + ATP = L-seryl-tRNA(Sec) + AMP + diphosphate + H(+). Its pathway is aminoacyl-tRNA biosynthesis; selenocysteinyl-tRNA(Sec) biosynthesis; L-seryl-tRNA(Sec) from L-serine and tRNA(Sec): step 1/1. Functionally, catalyzes the attachment of serine to tRNA(Ser). Is also able to aminoacylate tRNA(Sec) with serine, to form the misacylated tRNA L-seryl-tRNA(Sec), which will be further converted into selenocysteinyl-tRNA(Sec). The polypeptide is Serine--tRNA ligase (Xanthomonas euvesicatoria pv. vesicatoria (strain 85-10) (Xanthomonas campestris pv. vesicatoria)).